A 157-amino-acid chain; its full sequence is 17.8 kDa class I heat shock protein (157 aa).

Residues 43-157 form the sHSP domain; that stretch reads ETAAFVNTHI…PEVKAIDISG (115 aa).

It belongs to the small heat shock protein (HSP20) family. In terms of assembly, forms oligomeric structures.

It is found in the cytoplasm. This Daucus carota (Wild carrot) protein is 17.8 kDa class I heat shock protein.